The following is a 35-amino-acid chain: Conotoxin TxMEKL-0422 (35 aa).

The disordered stretch occupies residues 1–35 (NPASCCSCADVDPGRASRKTPKGEDQVFIKEKDRC). The span at 21 to 35 (PKGEDQVFIKEKDRC) shows a compositional bias: basic and acidic residues.

Post-translationally, contains disulfide bonds. As to expression, expressed by the venom duct.

The protein localises to the secreted. This chain is Conotoxin TxMEKL-0422, found in Conus textile (Cloth-of-gold cone).